Reading from the N-terminus, the 858-residue chain is Neural cell adhesion molecule 1 (858 aa).

An N-terminal signal peptide occupies residues M1–S19. Ig-like C2-type domains follow at residues L20 to N111, Q116 to Q205, P212 to H301, P308 to Q413, and P416 to E501. The Extracellular portion of the chain corresponds to L20–G718. Intrachain disulfides connect C41/C96 and C139/C189. N-linked (GlcNAc...) asparagine glycosylation occurs at N222. C235 and C287 form a disulfide bridge. N-linked (GlcNAc...) asparagine glycosylation is found at N315, N347, N433, N459, and N488. The cysteines at positions 329 and 395 are disulfide-linked. The cysteines at positions 436 and 489 are disulfide-linked. Fibronectin type-III domains are found at residues T509–V608 and E611–P706. P706 carries GPI-anchor amidated asparagine lipidation. A helical transmembrane segment spans residues L719–V739. Residues D740 to A858 lie on the Cytoplasmic side of the membrane. I741 carries the GPI-anchor amidated asparagine lipid modification. Residues G766 to A858 are disordered. Composition is skewed to basic and acidic residues over residues K768–P809 and E817–T834. Phosphoserine occurs at positions 780 and 784.

In terms of assembly, (Microbial infection) Interacts with rabies virus glycoprotein. As to quaternary structure, (Microbial infection) Interacts with Zika virus envelope protein E. Interacts with MDK. Found in a complex with SLC39A6, SLC39A10 and with NCAM1; this complex controls NCAM1 phosphorylation and integration into focal adhesion complexes during epithelial-tomesenchymal transition. Interacts with synaptic plasticity regulator PANTS. In terms of processing, polysialylated at Asn-459 and Asn-488 by ST8SIA2 and ST8SIA4. Polysialylation modulates cell interactions by confering both attractive and repulsive properties that are highly regulated by ST8SIA2 and ST8SIA4. Polysialylation is formed on a-2,3-linked sialic acid of core glycans.

The protein localises to the cell membrane. The protein resides in the secreted. Functionally, this protein is a cell adhesion molecule involved in neuron-neuron adhesion, neurite fasciculation, outgrowth of neurites, etc. Its function is as follows. (Microbial infection) Acts as a receptor for rabies virus. (Microbial infection) Acts as a receptor for Zika virus. This is Neural cell adhesion molecule 1 from Homo sapiens (Human).